Reading from the N-terminus, the 189-residue chain is GTP cyclohydrolase 1 (189 aa).

Zn(2+) contacts are provided by Cys-79, His-82, and Cys-151.

This sequence belongs to the GTP cyclohydrolase I family. Toroid-shaped homodecamer, composed of two pentamers of five dimers.

The enzyme catalyses GTP + H2O = 7,8-dihydroneopterin 3'-triphosphate + formate + H(+). Its pathway is cofactor biosynthesis; 7,8-dihydroneopterin triphosphate biosynthesis; 7,8-dihydroneopterin triphosphate from GTP: step 1/1. This Lactiplantibacillus plantarum (strain ATCC BAA-793 / NCIMB 8826 / WCFS1) (Lactobacillus plantarum) protein is GTP cyclohydrolase 1.